The primary structure comprises 143 residues: Large ribosomal subunit protein uL11 (143 aa).

The protein belongs to the universal ribosomal protein uL11 family. As to quaternary structure, part of the ribosomal stalk of the 50S ribosomal subunit. Interacts with L10 and the large rRNA to form the base of the stalk. L10 forms an elongated spine to which L12 dimers bind in a sequential fashion forming a multimeric L10(L12)X complex. In terms of processing, one or more lysine residues are methylated.

Forms part of the ribosomal stalk which helps the ribosome interact with GTP-bound translation factors. The protein is Large ribosomal subunit protein uL11 of Paraburkholderia xenovorans (strain LB400).